Consider the following 441-residue polypeptide: Xylose isomerase (441 aa).

Catalysis depends on residues histidine 105 and aspartate 108. The Mg(2+) site is built by glutamate 236, glutamate 272, histidine 275, aspartate 300, aspartate 311, aspartate 313, and aspartate 343.

This sequence belongs to the xylose isomerase family. As to quaternary structure, homotetramer. Mg(2+) is required as a cofactor.

It localises to the cytoplasm. The catalysed reaction is alpha-D-xylose = alpha-D-xylulofuranose. The chain is Xylose isomerase from Mesorhizobium japonicum (strain LMG 29417 / CECT 9101 / MAFF 303099) (Mesorhizobium loti (strain MAFF 303099)).